The sequence spans 155 residues: Small ribosomal subunit protein uS7 (155 aa).

Belongs to the universal ribosomal protein uS7 family. As to quaternary structure, part of the 30S ribosomal subunit. Contacts proteins S9 and S11.

One of the primary rRNA binding proteins, it binds directly to 16S rRNA where it nucleates assembly of the head domain of the 30S subunit. Is located at the subunit interface close to the decoding center, probably blocks exit of the E-site tRNA. This Mycoplasma pneumoniae (strain ATCC 29342 / M129 / Subtype 1) (Mycoplasmoides pneumoniae) protein is Small ribosomal subunit protein uS7.